Here is a 447-residue protein sequence, read N- to C-terminus: Elongation factor 1-alpha (447 aa).

In terms of domain architecture, tr-type G spans 5 to 230 (KVHINIVVIG…DNINEPKRPS (226 aa)). The interval 14–21 (GHVDSGKS) is G1. Residue 14 to 21 (GHVDSGKS) participates in GTP binding. Lys-55 carries the N6,N6-dimethyllysine modification. The segment at 70–74 (GITID) is G2. Lys-79 bears the N6,N6,N6-trimethyllysine mark. The tract at residues 91 to 94 (DAPG) is G3. Residues 91 to 95 (DAPGH) and 153 to 156 (NKMD) contribute to the GTP site. The G4 stretch occupies residues 153 to 156 (NKMD). Lys-187 carries the N6,N6,N6-trimethyllysine modification. The interval 194 to 196 (SGF) is G5. Lys-261 carries the post-translational modification N6-methyllysine. At Glu-289 the chain carries 5-glutamyl glycerylphosphorylethanolamine. Lys-306 bears the N6,N6,N6-trimethyllysine mark. 5-glutamyl glycerylphosphorylethanolamine is present on Glu-362. Lys-396 carries the N6,N6,N6-trimethyllysine modification.

This sequence belongs to the TRAFAC class translation factor GTPase superfamily. Classic translation factor GTPase family. EF-Tu/EF-1A subfamily.

Its subcellular location is the cytoplasm. This protein promotes the GTP-dependent binding of aminoacyl-tRNA to the A-site of ribosomes during protein biosynthesis. This is Elongation factor 1-alpha from Pisum sativum (Garden pea).